Consider the following 704-residue polypeptide: Polyribonucleotide nucleotidyltransferase 4 (704 aa).

The Mg(2+) site is built by Asp-483 and Asp-489. The KH domain occupies 550–609; it reads PRVLKMKIHPDKIRDVIGSGGKTINRIIDETGVKIDIDNDGTIFIAAESQEAVEKAIIII. One can recognise an S1 motif domain in the interval 619–687; sequence GQNYTGKVIK…QQGKINLSRK (69 aa).

The protein belongs to the polyribonucleotide nucleotidyltransferase family. The cofactor is Mg(2+).

The protein resides in the cytoplasm. It catalyses the reaction RNA(n+1) + phosphate = RNA(n) + a ribonucleoside 5'-diphosphate. Involved in mRNA degradation. Catalyzes the phosphorolysis of single-stranded polyribonucleotides processively in the 3'- to 5'-direction. This is Polyribonucleotide nucleotidyltransferase 4 from Alkaliphilus metalliredigens (strain QYMF).